A 286-amino-acid polypeptide reads, in one-letter code: Bifunctional protein FolD 2 (286 aa).

NADP(+)-binding positions include 165-167 (GRG), Thr192, and Ile233.

The protein belongs to the tetrahydrofolate dehydrogenase/cyclohydrolase family. In terms of assembly, homodimer.

It catalyses the reaction (6R)-5,10-methylene-5,6,7,8-tetrahydrofolate + NADP(+) = (6R)-5,10-methenyltetrahydrofolate + NADPH. The catalysed reaction is (6R)-5,10-methenyltetrahydrofolate + H2O = (6R)-10-formyltetrahydrofolate + H(+). The protein operates within one-carbon metabolism; tetrahydrofolate interconversion. Its function is as follows. Catalyzes the oxidation of 5,10-methylenetetrahydrofolate to 5,10-methenyltetrahydrofolate and then the hydrolysis of 5,10-methenyltetrahydrofolate to 10-formyltetrahydrofolate. The protein is Bifunctional protein FolD 2 of Salinispora tropica (strain ATCC BAA-916 / DSM 44818 / JCM 13857 / NBRC 105044 / CNB-440).